The primary structure comprises 98 residues: Thrombin-like enzyme cerastotin (98 aa).

Residues 1–98 form the Peptidase S1 domain; sequence VIGGAECNIN…IKKPVNGSTH (98 aa). Residues His-41 and Asp-85 each act as charge relay system in the active site. The N-linked (GlcNAc...) asparagine glycan is linked to Asn-94.

The protein belongs to the peptidase S1 family. Snake venom subfamily. Monomer. Expressed by the venom gland.

The protein resides in the secreted. Its activity is regulated as follows. Inhibited by PMSF. Its function is as follows. Thrombin-like snake venom serine protease that preferentially cleaves the alpha-chain of fibrinogen (FGA). Induce platelet aggregation in the presence of exogenous fibrinogen. Possesses esterase and amidolytic activities. This is Thrombin-like enzyme cerastotin from Cerastes cerastes (Horned desert viper).